A 279-amino-acid chain; its full sequence is Methyltransferase ausD (279 aa).

Residues D124–I125 and D152–V153 each bind S-adenosyl-L-methionine.

This sequence belongs to the class I-like SAM-binding methyltransferase superfamily. Homodimer.

The protein operates within secondary metabolite biosynthesis; terpenoid biosynthesis. Methyltransferase; part of the gene cluster A that mediates the biosynthesis of the fungal meroterpenoid acetoxydehydroaustin. The first step of the pathway is the synthesis of 3,5-dimethylorsellinic acid by the polyketide synthase ausA. 3,5-dimethylorsellinic acid is then prenylated by the polyprenyl transferase ausN. Further epoxidation by the FAD-dependent monooxygenase ausM and cyclization by the probable terpene cyclase ausL lead to the formation of protoaustinoid A. Protoaustinoid A is then oxidized to spiro-lactone preaustinoid A3 by the combined action of the FAD-binding monooxygenases ausB and ausC, and the dioxygenase ausE. Acid-catalyzed keto-rearrangement and ring contraction of the tetraketide portion of preaustinoid A3 by ausJ lead to the formation of preaustinoid A4. The aldo-keto reductase ausK, with the help of ausH, is involved in the next step by transforming preaustinoid A4 into isoaustinone which is in turn hydroxylated by the P450 monooxygenase ausI to form austinolide. The cytochrome P450 monooxygenase ausG then modifies austinolide to austinol. Austinol is further acetylated to austin by the O-acetyltransferase ausP, which spontaneously changes to dehydroaustin. The cytochrome P450 monooxygenase then converts dehydroaustin is into 7-dehydrodehydroaustin. The hydroxylation catalyzed by ausR permits the second O-acetyltransferase ausQ to add an additional acetyl group to the molecule, leading to the formation of acetoxydehydroaustin. Due to genetic rearrangements of the clusters and the subsequent loss of some enzymes, the end product of the Penicillium brasilianum austinoid biosynthesis clusters is acetoxydehydroaustin. The polypeptide is Methyltransferase ausD (Penicillium brasilianum).